The sequence spans 240 residues: Gas vesicle protein C (240 aa).

A compositionally biased stretch (basic and acidic residues) spans 1 to 13 (MALKDKWQQDRIG). Residues 1-20 (MALKDKWQQDRIGRQQGVQE) form a disordered region. 5 consecutive repeats follow at residues 18–50 (VQERQQQVQTTLSLWQQERQNQALDDQESRQGF), 51–83 (VTGVQQQTQELLTNISTERLWVAQQQREQLENF), 84–116 (IQQLSQEVGEFLQQTIEERSQVAAQLHQQLSEF), 117–149 (REDLEYRVTDLLANYQKQRLEARETLLEDLAIF), and 150–207 (RQTL…LQDY). Positions 18–207 (VQERQQQVQT…GVFRAELQDY (190 aa)) are 5 X 33 AA tandem repeats.

Belongs to the gas vesicle GvpC family.

The protein localises to the gas vesicle. Functionally, confers stability, involved in shaping gas vesicles, hollow, gas filled proteinaceous nanostructures. During planktonic growth they allow positioning of the organism at a favorable depth for light or nutrient acquisition. The protein is Gas vesicle protein C of Planktothrix agardhii (Oscillatoria agardhii).